The chain runs to 233 residues: Large ribosomal subunit protein uL1 (233 aa).

The protein belongs to the universal ribosomal protein uL1 family. In terms of assembly, part of the 50S ribosomal subunit.

Its function is as follows. Binds directly to 23S rRNA. The L1 stalk is quite mobile in the ribosome, and is involved in E site tRNA release. Functionally, protein L1 is also a translational repressor protein, it controls the translation of the L11 operon by binding to its mRNA. The chain is Large ribosomal subunit protein uL1 from Shewanella sp. (strain MR-4).